We begin with the raw amino-acid sequence, 470 residues long: uncharacterized protein (470 aa).

In terms of domain architecture, SPX spans 1-337; that stretch reads MKFGHDFKRA…SLTAQPLFFQ (337 aa). The interval 118 to 145 is disordered; it reads ASNVPSTPSDSTQQPPTNTLPSVSASSQ. A compositionally biased stretch (low complexity) spans 122 to 136; it reads PSTPSDSTQQPPTNT. The RING-type zinc-finger motif lies at 374–413; the sequence is CAICSNVAYKPVRLGCSHVFCLHCLIILQKQKVDFCPLCR.

The protein resides in the cytoplasm. This is an uncharacterized protein from Schizosaccharomyces pombe (strain 972 / ATCC 24843) (Fission yeast).